A 610-amino-acid chain; its full sequence is Glutamine--fructose-6-phosphate aminotransferase [isomerizing] (610 aa).

The active-site Nucleophile; for GATase activity is the Cys-2. A Glutamine amidotransferase type-2 domain is found at 2–219 (CGIVGAVAQR…EGDVAEITRR (218 aa)). SIS domains follow at residues 287–427 (ADEL…LRGM) and 459–600 (LAEG…VDQP). Lys-605 (for Fru-6P isomerization activity) is an active-site residue.

In terms of assembly, homodimer.

The protein localises to the cytoplasm. It carries out the reaction D-fructose 6-phosphate + L-glutamine = D-glucosamine 6-phosphate + L-glutamate. In terms of biological role, catalyzes the first step in hexosamine metabolism, converting fructose-6P into glucosamine-6P using glutamine as a nitrogen source. The polypeptide is Glutamine--fructose-6-phosphate aminotransferase [isomerizing] (Pectobacterium atrosepticum (strain SCRI 1043 / ATCC BAA-672) (Erwinia carotovora subsp. atroseptica)).